Here is a 438-residue protein sequence, read N- to C-terminus: MGFHIYEIKARQIIDSRGNPTVEADVILEDGTCGRSAVPSGASTGINEAVELRDGDKSVYMGKGVLKAIENIKNIIAPELEGMSALNQVAIDRKMLELDGTPTKEKLGANAILAVSMATAKAAAKYLGLKVYQYLGAYKANILPTPMCNIINGGAHSDNSVDFQEFMIMPVGAKTFSEAIRMAVEVFHTLKGILNGKGYATSVGDEGGFAPNLKSNEEACEMIIEAIKKAGYEPGKDIAIALDPATSELYDPKTKKYVLKWSTKEELTSEQMVEYWSKWVEKYPIISIEDGMAEEDWDGWKKLTDKIGHKIQLVGDDLFVTNTSFLKKGIEMGVANSILIKVNQIGTLTETFEAVEMAKKAGYTAIVSHRSGETEDTTIADLVVALGTGQIKTGSLSRTDRIAKYNQLIRIEEELETTAEYHGKNVFYSIKQKQIKSL.

Gln-164 lines the (2R)-2-phosphoglycerate pocket. Glu-206 functions as the Proton donor in the catalytic mechanism. Positions 243, 289, and 316 each coordinate Mg(2+). 4 residues coordinate (2R)-2-phosphoglycerate: Lys-341, Arg-370, Ser-371, and Lys-392. Residue Lys-341 is the Proton acceptor of the active site.

The protein belongs to the enolase family. Requires Mg(2+) as cofactor.

It is found in the cytoplasm. It localises to the secreted. The protein localises to the cell surface. It catalyses the reaction (2R)-2-phosphoglycerate = phosphoenolpyruvate + H2O. The protein operates within carbohydrate degradation; glycolysis; pyruvate from D-glyceraldehyde 3-phosphate: step 4/5. Catalyzes the reversible conversion of 2-phosphoglycerate (2-PG) into phosphoenolpyruvate (PEP). It is essential for the degradation of carbohydrates via glycolysis. The sequence is that of Enolase from Borrelia garinii subsp. bavariensis (strain ATCC BAA-2496 / DSM 23469 / PBi) (Borreliella bavariensis).